A 233-amino-acid polypeptide reads, in one-letter code: MSKLTKRQKEINSRIEHEKQYTIEEAVQILNDLPALKFKESIDIAVNLGVDPRKSDQVVRGATNLPAGTGKTKRVAVFAQGAAAEAAKEAGADIVGFEDLAESIKAGNMDFDVVIAAPDAMRVVGQLGTILGPRGLMPNPKVGTVTPNVAEAVLNAKAGQAQYRVDKAGIIHTTIGQVGFTAEQVIQNAEALISDLRRAKPATSKGTFIKKITLSSTMGPGLSIDPVPYRTAK.

It belongs to the universal ribosomal protein uL1 family. In terms of assembly, part of the 50S ribosomal subunit.

Its function is as follows. Binds directly to 23S rRNA. The L1 stalk is quite mobile in the ribosome, and is involved in E site tRNA release. Protein L1 is also a translational repressor protein, it controls the translation of the L11 operon by binding to its mRNA. The polypeptide is Large ribosomal subunit protein uL1 (Psychrobacter cryohalolentis (strain ATCC BAA-1226 / DSM 17306 / VKM B-2378 / K5)).